A 290-amino-acid polypeptide reads, in one-letter code: 3-deoxy-manno-octulosonate cytidylyltransferase, mitochondrial (290 aa).

A mitochondrion-targeting transit peptide spans 1 to 50; the sequence is MSVCSSSSSSQKTWIVNGILAGTAIAAAIGARAYLGRSKKFRSRVVGIIP.

It belongs to the KdsB family. The cofactor is Mg(2+). Expressed in roots, leaves, stems and siliques.

It localises to the mitochondrion outer membrane. The enzyme catalyses 3-deoxy-alpha-D-manno-oct-2-ulosonate + CTP = CMP-3-deoxy-beta-D-manno-octulosonate + diphosphate. It functions in the pathway nucleotide-sugar biosynthesis; CMP-3-deoxy-D-manno-octulosonate biosynthesis; CMP-3-deoxy-D-manno-octulosonate from 3-deoxy-D-manno-octulosonate and CTP: step 1/1. Inhibited by 2beta-deoxy-Kdo. Catalyzes the production of the sugar nucleotide CMP-3-deoxy-D-manno-octulosonate (CMP-KDO). CTP is the preferred nucleotide donor, but it can partially be replaced with UTP. Activates KDO during the biosynthesis of rhamnogalacturonan II (RG-II), a structurally complex pectic polysaccharide of the primary cell wall. RG-II is essential for the cell wall integrity of rapidly growing tissues and pollen tube growth and elongation. This is 3-deoxy-manno-octulosonate cytidylyltransferase, mitochondrial from Arabidopsis thaliana (Mouse-ear cress).